Reading from the N-terminus, the 427-residue chain is 3-phosphoshikimate 1-carboxyvinyltransferase (427 aa).

K22, S23, and R27 together coordinate 3-phosphoshikimate. K22 lines the phosphoenolpyruvate pocket. Residues G96 and R124 each coordinate phosphoenolpyruvate. 7 residues coordinate 3-phosphoshikimate: S169, S170, Q171, S197, D313, N336, and K340. Phosphoenolpyruvate is bound at residue Q171. The active-site Proton acceptor is the D313. Positions 344, 386, and 411 each coordinate phosphoenolpyruvate.

The protein belongs to the EPSP synthase family. In terms of assembly, monomer.

The protein localises to the cytoplasm. The enzyme catalyses 3-phosphoshikimate + phosphoenolpyruvate = 5-O-(1-carboxyvinyl)-3-phosphoshikimate + phosphate. The protein operates within metabolic intermediate biosynthesis; chorismate biosynthesis; chorismate from D-erythrose 4-phosphate and phosphoenolpyruvate: step 6/7. Its function is as follows. Catalyzes the transfer of the enolpyruvyl moiety of phosphoenolpyruvate (PEP) to the 5-hydroxyl of shikimate-3-phosphate (S3P) to produce enolpyruvyl shikimate-3-phosphate and inorganic phosphate. This chain is 3-phosphoshikimate 1-carboxyvinyltransferase, found in Escherichia coli O6:H1 (strain CFT073 / ATCC 700928 / UPEC).